Here is a 418-residue protein sequence, read N- to C-terminus: Serine/threonine-protein kinase Sgk1 (418 aa).

The disordered stretch occupies residues 50–78 (PQEPELLNENSSPPPSPSQQINLGPSSNP). Polar residues predominate over residues 68–78 (QQINLGPSSNP). The region spanning 85-342 (FQFLKIIGKG…FMEIKNHMFF (258 aa)) is the Protein kinase domain. Residues 91–99 (IGKGSFGKV) and Lys114 each bind ATP. The active-site Proton acceptor is Asp209. Residues 343–418 (SPINWDDLIN…SYAPPMESYL (76 aa)) form the AGC-kinase C-terminal domain.

This sequence belongs to the protein kinase superfamily. AGC Ser/Thr protein kinase family.

The protein resides in the cytoplasm. Its subcellular location is the nucleus. It is found in the endoplasmic reticulum. It carries out the reaction L-seryl-[protein] + ATP = O-phospho-L-seryl-[protein] + ADP + H(+). The catalysed reaction is L-threonyl-[protein] + ATP = O-phospho-L-threonyl-[protein] + ADP + H(+). In terms of biological role, protein kinase that may play an important role in cellular stress response. Plays an important role in activating certain potassium, sodium, and chloride channels, suggesting an involvement in the regulation of processes such as cell survival, neuronal excitability, and renal sodium excretion. The sequence is that of Serine/threonine-protein kinase Sgk1 (sgk1) from Xenopus tropicalis (Western clawed frog).